Consider the following 307-residue polypeptide: N-acetylglucosaminyl-diphospho-decaprenol L-rhamnosyltransferase (307 aa).

The protein belongs to the glycosyltransferase 2 family. Requires Mn(2+) as cofactor. It depends on Mg(2+) as a cofactor.

It catalyses the reaction N-acetyl-alpha-D-glucosaminyl-1-diphospho-trans,octa-cis-decaprenol + dTDP-beta-L-rhamnose = alpha-L-rhamnosyl-(1-&gt;3)-N-acetyl-alpha-D-glucosaminyl-diphospho-trans,octa-cis-decaprenol + dTDP + H(+). Involved in the biosynthesis of the mycolylarabinogalactan-peptidoglycan (mAGP) complex, an essential component of the mycobacterial cell wall. Catalyzes the transfer of the rhamnosyl moiety from dTDP-rhamnosyl (dTDP-Rha) onto the decaprenyl-pyrophosphoryl-GlcNAc (C50-PP-GlcNAc), yielding rhamnosyl-decaprenyl-pyrophosphoryl-GlcNAc (Rha-C50-PP-GlcNAc). The chain is N-acetylglucosaminyl-diphospho-decaprenol L-rhamnosyltransferase (wbbL) from Mycobacterium tuberculosis (strain CDC 1551 / Oshkosh).